The primary structure comprises 873 residues: Protein SEY1 (873 aa).

Positions 1–20 are disordered; the sequence is MVANGHFAGSADGQHSSSYE. The Cytoplasmic portion of the chain corresponds to 1–749; the sequence is MVANGHFAGS…KRSAIGGITQ (749 aa). One can recognise a GB1/RHD3-type G domain in the interval 49 to 307; that stretch reads GFNYHLISVF…IPADGFAVYA (259 aa). 59-66 contributes to the GTP binding site; it reads GSQSTGKS. Positions 482–506 form a coiled coil; the sequence is SNYQQELSLYQKDLERTSGQLRRDE. The tract at residues 677-703 is disordered; the sequence is DKWIGHTPSSATPADEEDLTPIGGVDD. Acidic residues predominate over residues 690–703; it reads ADEEDLTPIGGVDD. Residues 750–770 traverse the membrane as a helical segment; it reads VPLYFYGLLFALGWNEILAVL. Residues 771–773 lie on the Lumenal side of the membrane; that stretch reads RNP. A helical transmembrane segment spans residues 774–794; sequence VYFLLLFVCAIGAYITYQLNL. Residues 795–873 are Cytoplasmic-facing; the sequence is WGPIIKMTEA…EDVDDDDDDF (79 aa). The disordered stretch occupies residues 828–873; the sequence is RQAMAMSGARNATEEHEMSRLSRKPAERGGRKNRADEDVDDDDDDF. Over residues 839–863 the composition is skewed to basic and acidic residues; sequence ATEEHEMSRLSRKPAERGGRKNRAD. Positions 864–873 are enriched in acidic residues; the sequence is EDVDDDDDDF.

This sequence belongs to the TRAFAC class dynamin-like GTPase superfamily. GB1/RHD3 GTPase family. RHD3 subfamily.

It localises to the endoplasmic reticulum membrane. Cooperates with the reticulon proteins and tubule-shaping DP1 family proteins to generate and maintain the structure of the tubular endoplasmic reticulum network. Has GTPase activity, which is required for its function in ER organization. The chain is Protein SEY1 from Ajellomyces capsulatus (strain NAm1 / WU24) (Darling's disease fungus).